The following is a 217-amino-acid chain: Small ribosomal subunit protein uS3c (217 aa).

The KH type-2 domain maps to 39–109 (IRSCIEKQLH…QIRINLIEIT (71 aa)).

It belongs to the universal ribosomal protein uS3 family. Part of the 30S ribosomal subunit.

Its subcellular location is the plastid. It is found in the chloroplast. The polypeptide is Small ribosomal subunit protein uS3c (rps3) (Gracilaria tenuistipitata var. liui (Red alga)).